The primary structure comprises 271 residues: Putative phosphoenolpyruvate synthase regulatory protein (271 aa).

151–158 (GVSRSGKT) provides a ligand contact to ADP.

The protein belongs to the pyruvate, phosphate/water dikinase regulatory protein family. PSRP subfamily.

It catalyses the reaction [pyruvate, water dikinase] + ADP = [pyruvate, water dikinase]-phosphate + AMP + H(+). The catalysed reaction is [pyruvate, water dikinase]-phosphate + phosphate + H(+) = [pyruvate, water dikinase] + diphosphate. Functionally, bifunctional serine/threonine kinase and phosphorylase involved in the regulation of the phosphoenolpyruvate synthase (PEPS) by catalyzing its phosphorylation/dephosphorylation. The protein is Putative phosphoenolpyruvate synthase regulatory protein of Burkholderia orbicola (strain MC0-3).